We begin with the raw amino-acid sequence, 1137 residues long: Dendrite extension defective protein 1 (1137 aa).

Residues 1-41 (MLAHTHRINKCLYGQNQMRNRHALLGALPPIFLLLLPLISC) form the signal peptide. Residues 43-1005 (KFDPERIAAR…HAEEQSPRLA (963 aa)) are Extracellular-facing. One can recognise an NIDO 1 domain in the interval 163–302 (PFWNRNDLRN…GEWMFELSEL (140 aa)). N-linked (GlcNAc...) asparagine glycans are attached at residues Asn240 and Asn416. Positions 409–450 (DVDECKTNSTICHKNAICTNTPGRYFCMCKEGFSGDGQNDCS) constitute an EGF-like; calcium-binding domain. 3 disulfide bridges follow: Cys413–Cys426, Cys420–Cys435, and Cys437–Cys449. One can recognise an NIDO 2 domain in the interval 519–659 (PFFGPIDLSR…GTWLYRIDKA (141 aa)). An N-linked (GlcNAc...) asparagine glycan is attached at Asn571. Residues 738–749 (IGNQQRQQTTKA) are compositionally biased toward polar residues. 5 disordered regions span residues 738-765 (IGNQQRQQTTKAVTRPRPNFSSTPHRPI), 795-856 (FRPN…PFEA), 878-897 (QTTKKQRPELSVTPQPEDLS), 906-933 (TEEDEEEAEISTETTTEMSSTTTTTKAH), and 978-998 (NSQPPKQRNDNQPTVNVGHAE). N-linked (GlcNAc...) asparagine glycosylation is present at Asn756. Polar residues predominate over residues 798 to 809 (NQRNGVQKSTQR). A compositionally biased stretch (basic and acidic residues) spans 819–833 (PLKEEATTSVPREKT). Residues 906-915 (TEEDEEEAEI) show a composition bias toward acidic residues. The span at 916-933 (STETTTEMSSTTTTTKAH) shows a compositional bias: low complexity. Positions 978-992 (NSQPPKQRNDNQPTV) are enriched in polar residues. A helical membrane pass occupies residues 1006–1026 (ILLPVMIILAWLVILVCIGAV). The Cytoplasmic segment spans residues 1027 to 1037 (VCCKRRNSRES). Positions 1106 to 1125 (ARLSTQERQSPPSFVNNGYT) are disordered.

Post-translationally, may be proteolytically cleaved and secreted.

It is found in the membrane. The protein resides in the cell projection. Its subcellular location is the dendrite. It localises to the secreted. Functionally, along with dyf-7, enables neurite growth and maintenance by anchoring amphid dendritic tips during neuron cell body migration in embryonic and larval development. Promotes seam cell remodeling during the dauer phase. Plays a role in positively regulating locomotion during the dauer phase. This is Dendrite extension defective protein 1 from Caenorhabditis elegans.